Consider the following 877-residue polypeptide: Phosphoenolpyruvate carboxylase (877 aa).

Catalysis depends on residues histidine 138 and lysine 544.

The protein belongs to the PEPCase type 1 family. Mg(2+) is required as a cofactor.

It catalyses the reaction oxaloacetate + phosphate = phosphoenolpyruvate + hydrogencarbonate. Functionally, forms oxaloacetate, a four-carbon dicarboxylic acid source for the tricarboxylic acid cycle. This is Phosphoenolpyruvate carboxylase from Vibrio parahaemolyticus serotype O3:K6 (strain RIMD 2210633).